The following is a 327-amino-acid chain: Phenylalanine--tRNA ligase alpha subunit (327 aa).

Glu252 lines the Mg(2+) pocket.

It belongs to the class-II aminoacyl-tRNA synthetase family. Phe-tRNA synthetase alpha subunit type 1 subfamily. Tetramer of two alpha and two beta subunits. Mg(2+) is required as a cofactor.

Its subcellular location is the cytoplasm. The enzyme catalyses tRNA(Phe) + L-phenylalanine + ATP = L-phenylalanyl-tRNA(Phe) + AMP + diphosphate + H(+). This Photobacterium profundum (strain SS9) protein is Phenylalanine--tRNA ligase alpha subunit.